The chain runs to 158 residues: Phosphopantetheine adenylyltransferase (158 aa).

Substrate is bound at residue threonine 10. Residues threonine 10 to phenylalanine 11 and histidine 18 each bind ATP. The substrate site is built by lysine 42, leucine 74, and arginine 88. Residues glycine 89–arginine 91, glutamate 99, and asparagine 124–threonine 130 contribute to the ATP site.

This sequence belongs to the bacterial CoaD family. As to quaternary structure, homohexamer. Mg(2+) serves as cofactor.

Its subcellular location is the cytoplasm. The enzyme catalyses (R)-4'-phosphopantetheine + ATP + H(+) = 3'-dephospho-CoA + diphosphate. The protein operates within cofactor biosynthesis; coenzyme A biosynthesis; CoA from (R)-pantothenate: step 4/5. Reversibly transfers an adenylyl group from ATP to 4'-phosphopantetheine, yielding dephospho-CoA (dPCoA) and pyrophosphate. The sequence is that of Phosphopantetheine adenylyltransferase from Shewanella woodyi (strain ATCC 51908 / MS32).